We begin with the raw amino-acid sequence, 264 residues long: Transmembrane protein 41A (264 aa).

Positions 1–17 are cleaved as a signal peptide; the sequence is MRPLLGLLLVFAGCTFA. Transmembrane regions (helical) follow at residues 67 to 87, 100 to 122, 153 to 173, 175 to 195, and 219 to 239; these read AYVF…AIPG, GPWL…CYLL, LFFF…FLNL, APIL…GLIP, and WDTV…GTLI. The interval 96 to 207 is VTT domain; the sequence is GALFGPWLGL…FICVQTGSIL (112 aa). A glycan (N-linked (GlcNAc...) asparagine) is linked at Asn-250.

The protein belongs to the TMEM41 family.

The protein resides in the membrane. This Homo sapiens (Human) protein is Transmembrane protein 41A (TMEM41A).